We begin with the raw amino-acid sequence, 427 residues long: Enolase (427 aa).

(2R)-2-phosphoglycerate is bound at residue Q163. E205 acts as the Proton donor in catalysis. The Mg(2+) site is built by D242, E285, and D312. (2R)-2-phosphoglycerate contacts are provided by K337, R366, S367, and K388. K337 functions as the Proton acceptor in the catalytic mechanism.

This sequence belongs to the enolase family. Requires Mg(2+) as cofactor.

The protein localises to the cytoplasm. The protein resides in the secreted. Its subcellular location is the cell surface. It catalyses the reaction (2R)-2-phosphoglycerate = phosphoenolpyruvate + H2O. It functions in the pathway carbohydrate degradation; glycolysis; pyruvate from D-glyceraldehyde 3-phosphate: step 4/5. Its function is as follows. Catalyzes the reversible conversion of 2-phosphoglycerate (2-PG) into phosphoenolpyruvate (PEP). It is essential for the degradation of carbohydrates via glycolysis. In Nitrosospira multiformis (strain ATCC 25196 / NCIMB 11849 / C 71), this protein is Enolase.